Consider the following 138-residue polypeptide: Superoxide dismutase [Mn] (138 aa).

Positions 2, 49, 133, and 137 each coordinate Mn(2+).

The protein belongs to the iron/manganese superoxide dismutase family. Mn(2+) is required as a cofactor.

It catalyses the reaction 2 superoxide + 2 H(+) = H2O2 + O2. In terms of biological role, destroys superoxide anion radicals which are normally produced within the cells and which are toxic to biological systems. This chain is Superoxide dismutase [Mn] (sodA), found in Mycolicibacterium phlei (Mycobacterium phlei).